Consider the following 434-residue polypeptide: Probable phosphoglucosamine mutase (434 aa).

S91 acts as the Phosphoserine intermediate in catalysis. Residues S91, D229, D231, and D233 each coordinate Mg(2+). S91 is subject to Phosphoserine.

It belongs to the phosphohexose mutase family. Mg(2+) serves as cofactor. Post-translationally, activated by phosphorylation.

It catalyses the reaction alpha-D-glucosamine 1-phosphate = D-glucosamine 6-phosphate. Catalyzes the conversion of glucosamine-6-phosphate to glucosamine-1-phosphate. The polypeptide is Probable phosphoglucosamine mutase (Methanosarcina acetivorans (strain ATCC 35395 / DSM 2834 / JCM 12185 / C2A)).